The primary structure comprises 429 residues: 3-phosphoshikimate 1-carboxyvinyltransferase (429 aa).

3 residues coordinate 3-phosphoshikimate: lysine 20, serine 21, and arginine 25. Residue lysine 20 coordinates phosphoenolpyruvate. The phosphoenolpyruvate site is built by glycine 89 and arginine 118. 3-phosphoshikimate contacts are provided by serine 164, serine 165, glutamine 166, serine 192, aspartate 311, and lysine 338. Glutamine 166 contributes to the phosphoenolpyruvate binding site. The active-site Proton acceptor is the aspartate 311. Phosphoenolpyruvate-binding residues include arginine 342 and arginine 384.

The protein belongs to the EPSP synthase family. Monomer.

Its subcellular location is the cytoplasm. It catalyses the reaction 3-phosphoshikimate + phosphoenolpyruvate = 5-O-(1-carboxyvinyl)-3-phosphoshikimate + phosphate. Its pathway is metabolic intermediate biosynthesis; chorismate biosynthesis. Its function is as follows. Catalyzes the transfer of the enolpyruvyl moiety of phosphoenolpyruvate (PEP) to the 5-hydroxyl of shikimate-3-phosphate (S3P) to produce enolpyruvyl shikimate-3-phosphate and inorganic phosphate. The sequence is that of 3-phosphoshikimate 1-carboxyvinyltransferase from Methanococcus maripaludis (strain C7 / ATCC BAA-1331).